We begin with the raw amino-acid sequence, 215 residues long: Protein C' (215 aa).

Residues 12-34 (MPSFLKKILKLRGRRQEDESRSR) are disordered. Residues 15–22 (FLKKILKL) are involved in self-degradation and in host STAT1 degradation.

The protein belongs to the respirovirus protein C family. The different isoforms interact (via C-terminus) with unphosphorylated and phosphorylated human STAT1 (via N-terminus), favoring the formation of parallel STAT1 homodimers. The different isoforms do not interact with host STAT2. C protein interacts with L protein; this interaction has an inhibitory effect on viral transcription and replication. Post-translationally, Y1 and Y2 proteins are produced not only by alternative initiation, but also by proteolytic cleavage of C'. Only alternative initiation is detected in vitro, whereas in vivo cleavage seems to be predominant.

It is found in the host cytoplasm. Functionally, the different products prevent the establishment of cellular antiviral state by blocking the interferon-alpha/beta (IFN-alpha/beta) and IFN-gamma signaling pathways. They inhibit IFN-alpha/beta induced tyrosine phosphorylation of STAT1 and STAT2. Blocking the IFN-alpha/beta pathway requires binding to STAT1 in the cytoplasm. They inhibit IFN-gamma induced serine phosphorylation of STAT1. Block the IFN-gamma pathway by binding to and stabilizing the parallel form of the STAT1 dimer, further inducing high-molecular-weight complex formation and inhibition of transcription by IFN-gamma. May also have a role in preventing the cell to enter apoptosis. Modulate regulation of viral transcription and replication. Overexpression inhibits the viral RNA polymerase. The absence of all C', C, Y1 and Y2 proteins leads to viral delayed growth. Plays an important role in virion particles release. Modulates virion shape. This is Protein C' (P/V/C) from Sendai virus (strain Nagoya) (SeV).